A 308-amino-acid polypeptide reads, in one-letter code: Very-long-chain enoyl-CoA reductase (308 aa).

The Cytoplasmic portion of the chain corresponds to 1–86 (MKHYEVEIRD…YFRDLGAQIS (86 aa)). Lys-22 bears the N6-acetyllysine mark. Ser-58 is subject to Phosphoserine. N6-acetyllysine is present on Lys-60. The helical transmembrane segment at 87–106 (WVTVFLTEYAGPLFIYLLFY) threads the bilayer. Topologically, residues 107–124 (FRVPFIYGRKYDFTSSRH) are lumenal. Residues 125 to 147 (TVVHLACMCHSFHYIKRLLETLF) traverse the membrane as a helical segment. Residues 148 to 158 (VHRFSHGTMPL) are Cytoplasmic-facing. A helical membrane pass occupies residues 159–180 (RNIFKNCTYYWGFAAWMAYYIN). The Lumenal portion of the chain corresponds to 181 to 189 (HPLYTPPTY). A helical membrane pass occupies residues 190–216 (GVQQVKLALAVFVICQLGNFSIHMALR). Residues 217-245 (DLRPAGSKTRKIPYPTKNPFTWLFLLVSC) lie on the Cytoplasmic side of the membrane. Residues 246–262 (PNYTYEVGSWIGFAILT) form a helical membrane-spanning segment. At 263-264 (QC) the chain is on the lumenal side. The helical transmembrane segment at 265–292 (VPVALFSLVGFTQMTIWAKGKHRSYLKE) threads the bilayer. Residues 293–308 (FRDYPPLRMPIIPFLL) are Cytoplasmic-facing.

Belongs to the steroid 5-alpha reductase family. In terms of assembly, interacts with ELOVL1 and LASS2. In terms of processing, glycosylated.

The protein localises to the endoplasmic reticulum membrane. It carries out the reaction a very-long-chain 2,3-saturated fatty acyl-CoA + NADP(+) = a very-long-chain (2E)-enoyl-CoA + NADPH + H(+). The enzyme catalyses octadecanoyl-CoA + NADP(+) = (2E)-octadecenoyl-CoA + NADPH + H(+). It catalyses the reaction (2E,7Z,10Z,13Z,16Z)-docosapentaenoyl-CoA + NADPH + H(+) = (7Z,10Z,13Z,16Z)-docosatetraenoyl-CoA + NADP(+). The catalysed reaction is (2E,7Z,10Z,13Z,16Z,19Z)-docosahexaenoyl-CoA + NADPH + H(+) = (7Z,10Z,13Z,16Z,19Z)-docosapentaenoyl-CoA + NADP(+). It carries out the reaction (2E,8Z,11Z,14Z)-eicosatetraenoyl-CoA + NADPH + H(+) = (8Z,11Z,14Z)-eicosatrienoyl-CoA + NADP(+). The enzyme catalyses (2E)-hexadecenoyl-CoA + NADPH + H(+) = hexadecanoyl-CoA + NADP(+). The protein operates within lipid metabolism; fatty acid biosynthesis. It participates in lipid metabolism; sphingolipid metabolism. In terms of biological role, involved in both the production of very long-chain fatty acids for sphingolipid synthesis and the degradation of the sphingosine moiety in sphingolipids through the sphingosine 1-phosphate metabolic pathway. Catalyzes the last of the four reactions of the long-chain fatty acids elongation cycle. This endoplasmic reticulum-bound enzymatic process, allows the addition of 2 carbons to the chain of long- and very long-chain fatty acids/VLCFAs per cycle. This enzyme reduces the trans-2,3-enoyl-CoA fatty acid intermediate to an acyl-CoA that can be further elongated by entering a new cycle of elongation. Thereby, it participates in the production of VLCFAs of different chain lengths that are involved in multiple biological processes as precursors of membrane lipids and lipid mediators. Catalyzes the saturation step of the sphingosine 1-phosphate metabolic pathway, the conversion of trans-2-hexadecenoyl-CoA to palmitoyl-CoA. The chain is Very-long-chain enoyl-CoA reductase (Tecr) from Mus musculus (Mouse).